The sequence spans 354 residues: Alkanal monooxygenase alpha chain (354 aa).

The protein belongs to the bacterial luciferase oxidoreductase family. Heterodimer of an alpha and a beta chain.

The enzyme catalyses a long-chain fatty aldehyde + FMNH2 + O2 = a long-chain fatty acid + hnu + FMN + H2O + 2 H(+). Functionally, light-emitting reaction in luminous bacteria. The protein is Alkanal monooxygenase alpha chain (luxA) of Photobacterium leiognathi.